Consider the following 259-residue polypeptide: tRNA-cytidine(32) 2-sulfurtransferase (259 aa).

A PP-loop motif motif is present at residues 40–45 (SGGKDS). [4Fe-4S] cluster is bound by residues Cys114, Cys117, and Cys205.

Belongs to the TtcA family. Homodimer. The cofactor is Mg(2+). It depends on [4Fe-4S] cluster as a cofactor.

It localises to the cytoplasm. The catalysed reaction is cytidine(32) in tRNA + S-sulfanyl-L-cysteinyl-[cysteine desulfurase] + AH2 + ATP = 2-thiocytidine(32) in tRNA + L-cysteinyl-[cysteine desulfurase] + A + AMP + diphosphate + H(+). It participates in tRNA modification. In terms of biological role, catalyzes the ATP-dependent 2-thiolation of cytidine in position 32 of tRNA, to form 2-thiocytidine (s(2)C32). The sulfur atoms are provided by the cysteine/cysteine desulfurase (IscS) system. In Bdellovibrio bacteriovorus (strain ATCC 15356 / DSM 50701 / NCIMB 9529 / HD100), this protein is tRNA-cytidine(32) 2-sulfurtransferase.